A 341-amino-acid polypeptide reads, in one-letter code: Ribosomal RNA small subunit methyltransferase H (341 aa).

Residues G47–Y49, D64, F91, D109, and Q116 contribute to the S-adenosyl-L-methionine site.

The protein belongs to the methyltransferase superfamily. RsmH family.

It is found in the cytoplasm. It catalyses the reaction cytidine(1402) in 16S rRNA + S-adenosyl-L-methionine = N(4)-methylcytidine(1402) in 16S rRNA + S-adenosyl-L-homocysteine + H(+). Specifically methylates the N4 position of cytidine in position 1402 (C1402) of 16S rRNA. This chain is Ribosomal RNA small subunit methyltransferase H, found in Rhizobium johnstonii (strain DSM 114642 / LMG 32736 / 3841) (Rhizobium leguminosarum bv. viciae).